The chain runs to 1187 residues: DNA-directed RNA polymerase subunit beta (1187 aa).

Residues K1150–Q1187 form a disordered region. Over residues A1173–Q1187 the composition is skewed to basic and acidic residues.

It belongs to the RNA polymerase beta chain family. The RNAP catalytic core consists of 2 alpha, 1 beta, 1 beta' and 1 omega subunit. When a sigma factor is associated with the core the holoenzyme is formed, which can initiate transcription.

The enzyme catalyses RNA(n) + a ribonucleoside 5'-triphosphate = RNA(n+1) + diphosphate. DNA-dependent RNA polymerase catalyzes the transcription of DNA into RNA using the four ribonucleoside triphosphates as substrates. The sequence is that of DNA-directed RNA polymerase subunit beta from Bifidobacterium longum subsp. infantis (strain ATCC 15697 / DSM 20088 / JCM 1222 / NCTC 11817 / S12).